The sequence spans 1095 residues: DNA polymerase delta catalytic subunit (1095 aa).

Positions Met-1 to Pro-11 are enriched in basic residues. Residues Met-1 to Thr-37 are disordered. Zn(2+) is bound by residues Cys-1007, Cys-1010, Cys-1020, and Cys-1023. The CysA-type zinc-finger motif lies at Cys-1007–Cys-1023. [4Fe-4S] cluster contacts are provided by Cys-1052, Cys-1055, Cys-1065, and Cys-1070. The CysB motif motif lies at Cys-1052–Cys-1070.

This sequence belongs to the DNA polymerase type-B family. In terms of assembly, heterodimer with subunits of 125 kDa and 50 kDa. The 125 kDa subunit contains the polymerase active site and most likely the active site for the 3'-5' exonuclease activity. [4Fe-4S] cluster serves as cofactor.

It is found in the nucleus. It catalyses the reaction DNA(n) + a 2'-deoxyribonucleoside 5'-triphosphate = DNA(n+1) + diphosphate. Its function is as follows. This polymerase possesses two enzymatic activities: DNA synthesis (polymerase) and an exonucleolytic activity that degrades single-stranded DNA in the 3'- to 5'-direction. The sequence is that of DNA polymerase delta catalytic subunit (POLD1) from Arabidopsis thaliana (Mouse-ear cress).